The following is a 481-amino-acid chain: Trigger factor (481 aa).

The 138-residue stretch at 161-298 (GDQLTATVQT…VSEIQNRQLP (138 aa)) folds into the PPIase FKBP-type domain. Positions 173–245 (DGVPLHKLDE…PTTLIMEERR (73 aa)) are disordered. The segment covering 182 to 235 (EEDDDDDDDDDDDDDDDDDDDDDDDDDDDDDDDDDDDDDDDDDDDDDDDDDEGE) has biased composition (acidic residues).

Belongs to the FKBP-type PPIase family. Tig subfamily.

Its subcellular location is the cytoplasm. The enzyme catalyses [protein]-peptidylproline (omega=180) = [protein]-peptidylproline (omega=0). Functionally, involved in protein export. Acts as a chaperone by maintaining the newly synthesized protein in an open conformation. Functions as a peptidyl-prolyl cis-trans isomerase. The sequence is that of Trigger factor from Herpetosiphon aurantiacus (strain ATCC 23779 / DSM 785 / 114-95).